The chain runs to 187 residues: Large ribosomal subunit protein uL5 (187 aa).

The protein belongs to the universal ribosomal protein uL5 family. As to quaternary structure, part of the 50S ribosomal subunit; part of the 5S rRNA/L5/L18/L25 subcomplex. Contacts the 5S rRNA and the P site tRNA. Forms a bridge to the 30S subunit in the 70S ribosome.

Functionally, this is one of the proteins that bind and probably mediate the attachment of the 5S RNA into the large ribosomal subunit, where it forms part of the central protuberance. In the 70S ribosome it contacts protein S13 of the 30S subunit (bridge B1b), connecting the 2 subunits; this bridge is implicated in subunit movement. Contacts the P site tRNA; the 5S rRNA and some of its associated proteins might help stabilize positioning of ribosome-bound tRNAs. The polypeptide is Large ribosomal subunit protein uL5 (Gluconobacter oxydans (strain 621H) (Gluconobacter suboxydans)).